The chain runs to 394 residues: MGGAAARLGAVILFVVIVGLHGVRGKYALADASLKMADPNRFRGKDLPVPDRLTDPPGVRRVYHIQAGLPDPFQPPSLPITVYYAVLERACRSVLLNAPSEAPQIVRGGSEDVRKQPYNLTIAWFRMGGNCAIPITVMEYTECSYNKSLGACPIRTQPRWNYYDSFSAVSEDNLGFLMHAPAFETAGTYLRLVKINDWTEITQFILEHRAKGSCKYALPLRIPPSACLSPQAYQQGVTVDSIGMLPRFIPENQRIVAVYSLKIAGWHGPKAPYTSTLLPPELSETPNATQPELAPEDPEDSALLEDPVGTVAPQIPPNWHIPSIQDAATPYHPPATPNNMGLIAGAVGGSLLAALVICGIVYWMRRRTQKGPKRIRLPHIREDDQPSSHQPLFY.

Positions methionine 1–glycine 25 are cleaved as a signal peptide. The tract at residues glycine 25–proline 57 is interaction with TNFRSF14. The Virion surface portion of the chain corresponds to lysine 26–asparagine 339. Histidine 64 is a Zn(2+) binding site. Cystine bridges form between cysteine 91-cysteine 214, cysteine 131-cysteine 227, and cysteine 143-cysteine 152. 2 N-linked (GlcNAc...) asparagine; by host glycosylation sites follow: asparagine 119 and asparagine 146. Zn(2+) is bound at residue aspartate 240. The interval leucine 261 to glutamate 305 is profusion. The segment at serine 275–serine 301 is disordered. N-linked (GlcNAc...) asparagine; by host glycosylation is present at asparagine 287. The helical transmembrane segment at methionine 340–methionine 364 threads the bilayer. Residues arginine 365 to tyrosine 394 are Intravirion-facing. Residues arginine 374 to tyrosine 394 are disordered.

It belongs to the herpesviridae glycoprotein D family. Homodimer. Interacts with host receptor TNFRSF14. Interacts with host receptor NECTIN1. Interacts (via profusion domain) with gB; this interaction occurs in the absence of gH/gL. Interacts (via profusion domain) with gH/gL heterodimer; this interaction occurs in the absence of gB. Associates with the gB-gH/gL-gD complex. Interacts (via C-terminus) with UL11 tegument protein. Interacts with host RSAD2.

The protein localises to the virion membrane. It localises to the host Golgi apparatus. Functionally, envelope glycoprotein that binds to the host cell entry receptors NECTIN1, TNFRSF14/HVEM and 3-O-sulfated heparan sulfate, promoting the virus entry into host cells. May trigger fusion with host membrane, by recruiting the fusion machinery composed of gB and gH/gL. The sequence is that of Envelope glycoprotein D (gD) from Homo sapiens (Human).